Reading from the N-terminus, the 928-residue chain is Eukaryotic translation initiation factor 3 subunit C (928 aa).

Disordered regions lie at residues 1 to 37 and 157 to 286; these read MSRF…SDDE and FREA…EDGE. Residues 11 to 20 are compositionally biased toward acidic residues; that stretch reads SESESSEEEV. Polar residues predominate over residues 22-33; the sequence is TQFNNKAQNFQF. Ser34, Ser165, Ser177, and Ser186 each carry phosphoserine. Over residues 162-171 the composition is skewed to acidic residues; sequence DQESDVDEGE. Positions 172–184 are enriched in basic and acidic residues; the sequence is GDVHDSDADRAGD. Positions 215-240 are enriched in acidic residues; sequence DDDDSEDSIDWDPDTESETESSEDEN. Positions 245 to 264 are enriched in basic and acidic residues; that stretch reads MRERFLKRTTEKEDKDDDKR. Over residues 265 to 277 the composition is skewed to basic residues; the sequence is KDKRKEQKHKVRK. Positions 656 to 832 constitute a PCI domain; it reads FHMHINLELL…ETVVMHRSEP (177 aa). Residues 864 to 928 are disordered; the sequence is FFQRGNMGNR…QQQVHTIDEE (65 aa). A compositionally biased stretch (basic residues) spans 898–909; sequence QRNRNQRGHHKQ. Residues 910 to 921 are compositionally biased toward low complexity; that stretch reads NQQQNQQQQQQQ.

It belongs to the eIF-3 subunit C family. Component of the eukaryotic translation initiation factor 3 (eIF-3) complex. The eIF-3 complex interacts with pix.

Its subcellular location is the cytoplasm. Its function is as follows. Component of the eukaryotic translation initiation factor 3 (eIF-3) complex, which is involved in protein synthesis of a specialized repertoire of mRNAs and, together with other initiation factors, stimulates binding of mRNA and methionyl-tRNAi to the 40S ribosome. The eIF-3 complex specifically targets and initiates translation of a subset of mRNAs involved in cell proliferation. This is Eukaryotic translation initiation factor 3 subunit C from Drosophila grimshawi (Hawaiian fruit fly).